A 247-amino-acid polypeptide reads, in one-letter code: Uridylate kinase (247 aa).

Residue 21-24 (KVSG) participates in ATP binding. Glycine 63 contributes to the UMP binding site. ATP contacts are provided by glycine 64 and arginine 68. UMP-binding positions include aspartate 83 and 144 to 151 (TGNPFCTT). Residues threonine 171, glutamine 172, tyrosine 177, and aspartate 180 each contribute to the ATP site.

This sequence belongs to the UMP kinase family. In terms of assembly, homohexamer.

The protein resides in the cytoplasm. The catalysed reaction is UMP + ATP = UDP + ADP. Its pathway is pyrimidine metabolism; CTP biosynthesis via de novo pathway; UDP from UMP (UMPK route): step 1/1. Its activity is regulated as follows. Inhibited by UTP. In terms of biological role, catalyzes the reversible phosphorylation of UMP to UDP. This Rickettsia rickettsii (strain Sheila Smith) protein is Uridylate kinase.